We begin with the raw amino-acid sequence, 89 residues long: Cell division topological specificity factor (89 aa).

The protein belongs to the MinE family.

In terms of biological role, prevents the cell division inhibition by proteins MinC and MinD at internal division sites while permitting inhibition at polar sites. This ensures cell division at the proper site by restricting the formation of a division septum at the midpoint of the long axis of the cell. The sequence is that of Cell division topological specificity factor from Sodalis glossinidius (strain morsitans).